A 225-amino-acid chain; its full sequence is tRNA 2'-phosphotransferase 1 (225 aa).

Residues 1 to 21 (MDCETRGRGRRGRGNRNEESR) form a disordered region.

The protein belongs to the KptA/TPT1 family.

The enzyme catalyses 2'-phospho-[ligated tRNA] + NAD(+) = mature tRNA + ADP-alpha-D-ribose 1'',2''-cyclic phosphate + nicotinamide. Functionally, catalyzes the last step of tRNA splicing, the transfer of the splice junction 2'-phosphate from ligated tRNA to NAD to produce ADP-ribose 1''-2'' cyclic phosphate. The protein is tRNA 2'-phosphotransferase 1 (trpt1) of Danio rerio (Zebrafish).